The chain runs to 208 residues: DNA-binding protein HupB (208 aa).

Residues 1–90 are bacterial histone-like domain; sequence MNKAELIDVL…PGAQFKAVIS (90 aa). K3 is subject to N6-acetyllysine. K3 is modified (N6-acetyllysine; alternate; partial). Position 3 is an N6-methyllysine; alternate; partial (K3). At K72 the chain carries N6-acetyllysine; partial. K86 bears the N6-methyllysine; partial mark. The C-terminus, required for nucleoid localization stretch occupies residues 92–208; that stretch reads AQKLPADGPA…KKAPAKKGRR (117 aa). N6-acetyllysine; alternate; partial is present on residues K94 and K103. N6-methyllysine; alternate; partial occurs at positions 94 and 103. The tract at residues 96–208 is disordered; that stretch reads PADGPAVKRG…KKAPAKKGRR (113 aa). Residues 101–205 form a degenerate repeats region region; sequence AVKRGVTAGP…AAAKKAPAKK (105 aa). Positions 113–208 are enriched in basic residues; it reads KAAKKAPAKK…KKAPAKKGRR (96 aa). Residues K116, K136, K149, and K168 each carry the N6-acetyllysine modification.

Belongs to the bacterial histone-like protein family. Long actinobacterial subfamily. In terms of assembly, may form oligomers. Interacts with RNase E (rne). In terms of processing, in addition to the identifed modifications, is also methylated on one of Arg-53; Arg-54 or Arg-55.

The protein localises to the cytoplasm. It is found in the nucleoid. Its subcellular location is the secreted. The protein resides in the cell wall. The enzyme catalyses 4 Fe(2+) + O2 + 4 H(+) = 4 Fe(3+) + 2 H2O. Trans-stilbene derivative 4,4'-[(E)-ethene-1,2 diylbis({5[(phenylcarbonyl)amino]benzene-2,1-diyl}sulfonylimino)] dibenzoic acid (SD1) inhibits DNA binding at 50 uM. SD1 does not inhibit growth in a range of 3-1600 uM. A nucleoid-associated protein (NAP) that plays a crucial role in local chromosome architecture. Helps organize newly replicated oriC proximal regions and contributes to the timing of replication initiation and coordinating replication with chromosome segregation. There are between 30,000-60,000 molecules in a log phase cell; the protein-DNA complex is dynamic during the cell cycle, with more complexes near the cell ends. Binds irregularly along the chromosome with higher binding near the origin of replication (oriC) and lowest binding near the chromosome terminus (ter). Binds DNA non-sequence specifically via both its N- and C-terminal domains with high affinity, has no preference for linear or supercoiled DNA. Binds four-way junction DNA. Represses T7 RNA polymerase in vitro. The C-terminal domain enhances DNA end-joining in vitro in the presence of T4 DNA ligase. RNase E and HupB jointly contribute to cellular adaptation to changing growth conditions and survival during antibiotic treatment. Its function is as follows. Has ferroxidase activity, converts Fe(2+) into Fe(3+). Binds Fe(3+) but not Fe(2+); prevents the generation of hydroxyl radicals by the Fenton reaction and thus protects DNA from damage. May function in iron storage. In terms of biological role, plays a role in epigenetic resistance to antibiotics. Growth on levels of isoniazid (INH) near the minimal inhibitory concentration (MIC) kills most bacteria. The surviving cells grow as either large or small colony variants (SCV), evidence suggest SCVs are associated with persistent infections. Mutating this protein leads to specific loss of SCVs. Functionally, may play a role in cell wall assembly. This is DNA-binding protein HupB from Mycolicibacterium smegmatis (strain ATCC 700084 / mc(2)155) (Mycobacterium smegmatis).